The chain runs to 2156 residues: Probable capsid protein 3 (2156 aa).

A disordered region spans residues 1319-1345 (NKSNKSNKSNESDKSSESDKSSESSNH). The segment covering 1326-1345 (KSNESDKSSESDKSSESSNH) has biased composition (basic and acidic residues).

It belongs to the NCLDV major capsid protein family.

The protein resides in the virion. In Acanthamoeba polyphaga mimivirus (APMV), this protein is Probable capsid protein 3.